Here is a 220-residue protein sequence, read N- to C-terminus: Ribose-5-phosphate isomerase A (220 aa).

Substrate contacts are provided by residues 28–31 (TGST), 81–84 (DGAD), and 94–97 (KGGG). The active-site Proton acceptor is Glu103. Residue Lys121 participates in substrate binding.

The protein belongs to the ribose 5-phosphate isomerase family. Homodimer.

The enzyme catalyses aldehydo-D-ribose 5-phosphate = D-ribulose 5-phosphate. The protein operates within carbohydrate degradation; pentose phosphate pathway; D-ribose 5-phosphate from D-ribulose 5-phosphate (non-oxidative stage): step 1/1. In terms of biological role, catalyzes the reversible conversion of ribose-5-phosphate to ribulose 5-phosphate. This chain is Ribose-5-phosphate isomerase A, found in Hydrogenovibrio crunogenus (strain DSM 25203 / XCL-2) (Thiomicrospira crunogena).